Here is a 99-residue protein sequence, read N- to C-terminus: NADH-quinone oxidoreductase subunit K 1 (99 aa).

Transmembrane regions (helical) follow at residues 3–23, 28–48, and 59–79; these read PVNY…GVLV, IVVF…LVTF, and IVAF…LAII.

This sequence belongs to the complex I subunit 4L family. NDH-1 is composed of 14 different subunits. Subunits NuoA, H, J, K, L, M, N constitute the membrane sector of the complex.

The protein resides in the cell membrane. It catalyses the reaction a quinone + NADH + 5 H(+)(in) = a quinol + NAD(+) + 4 H(+)(out). Functionally, NDH-1 shuttles electrons from NADH, via FMN and iron-sulfur (Fe-S) centers, to quinones in the respiratory chain. The immediate electron acceptor for the enzyme in this species is believed to be a menaquinone. Couples the redox reaction to proton translocation (for every two electrons transferred, four hydrogen ions are translocated across the cytoplasmic membrane), and thus conserves the redox energy in a proton gradient. The chain is NADH-quinone oxidoreductase subunit K 1 from Streptomyces griseus subsp. griseus (strain JCM 4626 / CBS 651.72 / NBRC 13350 / KCC S-0626 / ISP 5235).